Reading from the N-terminus, the 954-residue chain is Calsyntenin-1 (954 aa).

A signal peptide spans 1-25 (MRIRGVKPFASAVGLLLGLLYAVDA). At 26-833 (AKVNKHKPWI…THQASVVPSA (808 aa)) the chain is on the extracellular side. 2 consecutive Cadherin domains span residues 35–151 (IETT…SPVF) and 152–252 (KEKS…KPSW). 3 N-linked (GlcNAc...) asparagine glycosylation sites follow: Asn333, Asn353, and Asn552. A helical membrane pass occupies residues 834–854 (ATIVIVVCVSFLVFMIILGVF). Topologically, residues 855-954 (RIRAAHQRTM…LEWDDSTLTY (100 aa)) are cytoplasmic. The disordered stretch occupies residues 891–954 (TYEDQHSSEE…LEWDDSTLTY (64 aa)). Positions 900 to 935 (EEGDEEEEESEDGEEEDDITSAESDSSEDEAGEQED) are enriched in acidic residues.

The protein belongs to the calsyntenin family. Homooligomer and heterooligomer; mediates both homophilic and heterophilc interactions with clstn2 and clstn3 paralogs via cadherin domains. As to expression, by 48 hours post-fertilization (hpf), widely expressed in the brain, with strong expression in the telencephalon and the midbrain.

It localises to the postsynaptic cell membrane. Its subcellular location is the endoplasmic reticulum membrane. It is found in the golgi apparatus membrane. The protein localises to the cell projection. The protein resides in the neuron projection. Its function is as follows. Postsynaptic adhesion molecule involved in vesicle trafficking; required for branching of peripheral but not central axons of sensory neurons. Promotes synapse development by acting as a cell adhesion molecule at the postsynaptic membrane, which associates with presynaptic neurexins. The polypeptide is Calsyntenin-1 (Danio rerio (Zebrafish)).